The primary structure comprises 853 residues: Auxin response factor 23 (853 aa).

Positions 121–141 are disordered; the sequence is KQQEDNGSTEEEVPSAPAAGH. The TF-B3 DNA-binding region spans 149–251; sequence FCKTLTASDT…ELRVGVRRAM (103 aa). 2 disordered regions span residues 422-471 and 647-723; these read ESEP…NNTP and PAKS…QGVS. Residues 425–455 show a composition bias toward polar residues; sequence PNGTQRTFQTQENATPKSGFGNSSELESAQK. Residues 672–686 are compositionally biased toward basic and acidic residues; it reads EWRRPDVTEVEKCSD. Positions 706-723 are enriched in polar residues; that stretch reads PSSQQASRNMSCKSQGVS. In terms of domain architecture, PB1 spans 725–809; the sequence is RSCKKVHKQG…HKIFIYTREE (85 aa). A disordered region spans residues 815–853; sequence PGTLNSRSEDSHANSMERGSVGREMRGCLSTSSLNSENC. Positions 843 to 853 are enriched in polar residues; the sequence is LSTSSLNSENC.

Belongs to the ARF family. Homodimers and heterodimers.

It is found in the nucleus. In terms of biological role, auxin response factors (ARFs) are transcriptional factors that bind specifically to the DNA sequence 5'-TGTCTC-3' found in the auxin-responsive promoter elements (AuxREs). The sequence is that of Auxin response factor 23 (ARF23) from Oryza sativa subsp. indica (Rice).